The primary structure comprises 146 residues: 3-hydroxyacyl-[acyl-carrier-protein] dehydratase FabZ (146 aa).

Residue H49 is part of the active site.

The protein belongs to the thioester dehydratase family. FabZ subfamily.

The protein resides in the cytoplasm. It catalyses the reaction a (3R)-hydroxyacyl-[ACP] = a (2E)-enoyl-[ACP] + H2O. Functionally, involved in unsaturated fatty acids biosynthesis. Catalyzes the dehydration of short chain beta-hydroxyacyl-ACPs and long chain saturated and unsaturated beta-hydroxyacyl-ACPs. The polypeptide is 3-hydroxyacyl-[acyl-carrier-protein] dehydratase FabZ (Pseudomonas putida (strain ATCC 700007 / DSM 6899 / JCM 31910 / BCRC 17059 / LMG 24140 / F1)).